The following is a 715-amino-acid chain: DNA-directed RNA polymerase subunit beta' (715 aa).

Zn(2+) contacts are provided by C69, C71, C87, and C90. The interval 244 to 272 (APESQSEVIEAQGPVPQAEEEKQRDQSIQ) is disordered. Residues D520, D522, and D524 each contribute to the Mg(2+) site.

It belongs to the RNA polymerase beta' chain family. RpoC1 subfamily. In terms of assembly, in plastids the minimal PEP RNA polymerase catalytic core is composed of four subunits: alpha, beta, beta', and beta''. When a (nuclear-encoded) sigma factor is associated with the core the holoenzyme is formed, which can initiate transcription. Requires Mg(2+) as cofactor. Zn(2+) is required as a cofactor.

It localises to the plastid. The protein resides in the chloroplast. It catalyses the reaction RNA(n) + a ribonucleoside 5'-triphosphate = RNA(n+1) + diphosphate. In terms of biological role, DNA-dependent RNA polymerase catalyzes the transcription of DNA into RNA using the four ribonucleoside triphosphates as substrates. In Zygnema circumcarinatum (Green alga), this protein is DNA-directed RNA polymerase subunit beta'.